The following is a 249-amino-acid chain: MADS-box transcription factor 17 (249 aa).

Positions 1–61 constitute an MADS-box domain; that stretch reads MGRGRVELKR…GKLYEFGSAG (61 aa). The region spanning 88–178 is the K-box domain; it reads HQSWYQEMSR…KNKLEAEADS (91 aa). A disordered region spans residues 228-249; the sequence is ANPRSNGGGGDQNNNFVMGWPL.

As to quaternary structure, may interact with the K-box of MADS6. As to expression, expressed in the floral meristem, lodicule, palea, lemma, receptacle, empty glume, stamen, pistil, and ovule.

The protein localises to the nucleus. Probable transcription factor. Plays minor but redundant roles with MADS6 in floral development. The sequence is that of MADS-box transcription factor 17 (MADS17) from Oryza sativa subsp. japonica (Rice).